Consider the following 214-residue polypeptide: Cytochrome b (214 aa).

A run of 4 helical transmembrane segments spans residues 31-51, 75-96, 111-131, and 176-196; these read FGSMLLACLMTQIITGFFLAI, WIMQNTHAISASLFFICIYIHI, WLSGTTLLIILMATAFFGYVL, and FFALHFIFPFIIISMSSIHIL. Residues His-81 and His-95 each contribute to the heme b site. Heme b-binding residues include His-180 and His-194. A ubiquinone is bound at residue His-199.

The protein belongs to the cytochrome b family. As to quaternary structure, the cytochrome bc1 complex contains 3 respiratory subunits (MT-CYB, CYC1 and UQCRFS1), 2 core proteins (UQCRC1 and UQCRC2) and probably 6 low-molecular weight proteins. Heme b serves as cofactor.

It localises to the mitochondrion inner membrane. Its function is as follows. Component of the ubiquinol-cytochrome c reductase complex (complex III or cytochrome b-c1 complex) that is part of the mitochondrial respiratory chain. The b-c1 complex mediates electron transfer from ubiquinol to cytochrome c. Contributes to the generation of a proton gradient across the mitochondrial membrane that is then used for ATP synthesis. This chain is Cytochrome b (MT-CYB), found in Bothrops bilineatus (Green jararaca).